We begin with the raw amino-acid sequence, 699 residues long: Long-chain-fatty-acid--CoA ligase 1 (699 aa).

Met1 carries the post-translational modification N-acetylmethionine. 3'-nitrotyrosine is present on Tyr9. Residues 25–45 (LPTNTLMGFGAFAALTTFWYA) form a helical; Signal-anchor for type III membrane protein membrane-spanning segment. The Cytoplasmic portion of the chain corresponds to 46-699 (TRPKALKPPC…IDELYATIKI (654 aa)). Position 85 is a phosphotyrosine (Tyr85). Tyr86 is modified (3'-nitrotyrosine). A glycan (O-linked (GlcNAc) serine) is linked at Ser136. Residues Lys208, Lys357, and Lys387 each carry the N6-acetyllysine modification. At Ser621 the chain carries Phosphoserine. Lys633 carries the N6-acetyllysine modification.

Belongs to the ATP-dependent AMP-binding enzyme family. Mg(2+) serves as cofactor.

Its subcellular location is the mitochondrion outer membrane. It is found in the peroxisome membrane. The protein localises to the microsome membrane. The protein resides in the endoplasmic reticulum membrane. It catalyses the reaction a long-chain fatty acid + ATP + CoA = a long-chain fatty acyl-CoA + AMP + diphosphate. The catalysed reaction is (5Z,8Z,11Z,14Z)-eicosatetraenoate + ATP + CoA = (5Z,8Z,11Z,14Z)-eicosatetraenoyl-CoA + AMP + diphosphate. It carries out the reaction 3,7,11,15-tetramethylhexadecanoate + ATP + CoA = phytanoyl-CoA + AMP + diphosphate. The enzyme catalyses hexadecanoate + ATP + CoA = hexadecanoyl-CoA + AMP + diphosphate. It catalyses the reaction (E)-hexadec-2-enoate + ATP + CoA = (2E)-hexadecenoyl-CoA + AMP + diphosphate. The catalysed reaction is 2,6,10,14-tetramethylpentadecanoate + ATP + CoA = pristanoyl-CoA + AMP + diphosphate. It carries out the reaction 14,15-epoxy-(5Z,8Z,11Z)-eicosatrienoate + ATP + CoA = 14,15-epoxy-(5Z,8Z,11Z)-eicosatrienoyl-CoA + AMP + diphosphate. The enzyme catalyses 5-hydroxy-(6E,8Z,11Z,14Z)-eicosatetraenoate + ATP + CoA = 5-hydroxy-(6E,8Z,11Z,14Z)-eicosatetraenoyl-CoA + AMP + diphosphate. It catalyses the reaction 12-hydroxy-(5Z,8Z,10E,14Z)-eicosatetraenoate + ATP + CoA = 12-hydroxy-(5Z,8Z,10E,14Z)-eicosatetraenoyl-CoA + AMP + diphosphate. The catalysed reaction is 15-hydroxy-(5Z,8Z,11Z,13E)-eicosatetraenoate + ATP + CoA = 15-hydroxy-(5Z,8Z,11Z,13E)-eicosatetraenoyl-CoA + AMP + diphosphate. It carries out the reaction (9Z)-octadecenoate + ATP + CoA = (9Z)-octadecenoyl-CoA + AMP + diphosphate. Inhibited at high temperature and by arachidonate. Its function is as follows. Catalyzes the conversion of long-chain fatty acids to their active form acyl-CoAs for both synthesis of cellular lipids, and degradation via beta-oxidation. Preferentially uses palmitoleate, oleate and linoleate. Preferentially activates arachidonate than epoxyeicosatrienoic acids (EETs) or hydroxyeicosatrienoic acids (HETEs). The sequence is that of Long-chain-fatty-acid--CoA ligase 1 from Mus musculus (Mouse).